Consider the following 658-residue polypeptide: Glycogen debranching enzyme (658 aa).

The active-site Nucleophile is the Asp-336. The active-site Proton donor is Glu-371. Residues 460-484 (ANGEENRDGSNNNHSNNHGKEGLGG) form a disordered region.

Belongs to the glycosyl hydrolase 13 family.

It carries out the reaction Hydrolysis of (1-&gt;6)-alpha-D-glucosidic linkages to branches with degrees of polymerization of three or four glucose residues in limit dextrin.. It functions in the pathway glycan degradation; glycogen degradation. Its function is as follows. Removes maltotriose and maltotetraose chains that are attached by 1,6-alpha-linkage to the limit dextrin main chain, generating a debranched limit dextrin. This chain is Glycogen debranching enzyme, found in Escherichia fergusonii (strain ATCC 35469 / DSM 13698 / CCUG 18766 / IAM 14443 / JCM 21226 / LMG 7866 / NBRC 102419 / NCTC 12128 / CDC 0568-73).